Here is a 749-residue protein sequence, read N- to C-terminus: Disintegrin and metalloproteinase domain-containing protein 10 (749 aa).

Residues 1–19 (MVLPTVLILLLSWAAGLGG) form the signal peptide. A propeptide spanning residues 20–214 (QYGNPLNKYI…SGPELLRKKR (195 aa)) is cleaved from the precursor. Residues 20–673 (QYGNPLNKYI…SPQLYENIAE (654 aa)) lie on the Extracellular side of the membrane. The Cysteine switch motif lies at 171-178 (GGCADHSV). C173 serves as a coordination point for Zn(2+). A Peptidase M12B domain is found at 221 to 457 (NTCQLYIQTD…KRNNCFVESG (237 aa)). 17 cysteine pairs are disulfide-bonded: C223-C314, C345-C452, C400-C436, C461-C496, C472-C485, C474-C480, C484-C516, C504-C512, C511-C537, C525-C544, C531-C563, C556-C568, C573-C599, C581-C608, C583-C598, C595-C640, and C633-C646. N268 and N279 each carry an N-linked (GlcNAc...) asparagine glycan. H384 serves as a coordination point for Zn(2+). Residue E385 is part of the active site. Zn(2+)-binding residues include H388 and H394. N440 is a glycosylation site (N-linked (GlcNAc...) asparagine). Residues 458 to 552 (QPICGNGMVE…LCPASDPKPN (95 aa)) enclose the Disintegrin domain. N-linked (GlcNAc...) asparagine glycosylation occurs at N552. Residues 674–694 (WIVAHWWAVLLMGIALIMLMA) form a helical membrane-spanning segment. The Cytoplasmic segment spans residues 695–749 (GFIKICSVHTPSSNPKLPPPKPLPGTLKRRRPPQPIQQPPRQRPRESYQMGHMRR). The disordered stretch occupies residues 705–749 (PSSNPKLPPPKPLPGTLKRRRPPQPIQQPPRQRPRESYQMGHMRR). The short motif at 709–716 (PKLPPPKP) is the SH3-binding element. T720 is modified (phosphothreonine). The SH3-binding signature appears at 723-729 (RRRPPQP). Positions 735–749 (RQRPRESYQMGHMRR) are interaction with AP2A1, AP2A2 and AP2M1.

As to quaternary structure, forms a ternary EFNA5-EPHA3-ADAM10 complex mediating EFNA5 extracellular domain shedding by ADAM10 which regulates the EFNA5-EPHA3 complex internalization and function, the cleavage occurs in trans, with ADAM10 and its substrate being on the membranes of opposing cells. Interacts with the clathrin adapter AP2 complex subunits AP2A1, AP2A2, AP2B1, and AP2M1; this interaction facilitates ADAM10 endocytosis from the plasma membrane during long-term potentiation in hippocampal neurons. Forms a ternary complex composed of ADAM10, EPHA4 and CADH1; within the complex, ADAM10 cleaves CADH1 which disrupts adherens junctions. Interacts with EPHA2. Interacts with NGF in a divalent cation-dependent manner. Interacts with TSPAN14; the interaction promotes ADAM10 maturation and cell surface expression. Interacts with TSPAN5, TSPAN10, TSPAN14, TSPAN15, TSPAN17 and TSPAN33; these interactions regulate ADAM10 substrate specificity, endocytosis and turnover. Interacts (via extracellular domain) with TSPAN33 (via extracellular domain) and (via cytoplasmic domain) with AFDN; interaction with TSPAN33 allows the docking of ADAM10 to zonula adherens through a PDZ11-dependent interaction between TSPAN33 and PLEKHA7 while interaction with AFDN locks ADAM10 at zonula adherens. Interacts with DLG1; this interaction recruits ADAM10 to the cell membrane during long-term depression in hippocampal neurons. Interacts (via extracellular domain) with BACE1 (via extracellular domain). Interacts with FAM171A1. Zn(2+) is required as a cofactor. In terms of processing, the precursor is cleaved by furin and PCSK7. Expressed in the brain, specifically in neurons and astrocytes (at protein level). Expressed in inner and outer pillar cells of the organ of Corti (at protein level). Expressed in kidney and lung.

The protein resides in the cell membrane. It is found in the golgi apparatus membrane. The protein localises to the cytoplasmic vesicle. It localises to the clathrin-coated vesicle. Its subcellular location is the cell projection. The protein resides in the axon. It is found in the dendrite. The protein localises to the cell junction. It localises to the adherens junction. Its subcellular location is the cytoplasm. It carries out the reaction Endopeptidase of broad specificity.. Its activity is regulated as follows. Catalytically inactive when the propeptide is intact and associated with the mature enzyme. The disintegrin and cysteine-rich regions modulate access of substrates to exerts an inhibitory effect on the cleavage of ADAM10 substrates. In terms of biological role, transmembrane metalloprotease which mediates the ectodomain shedding of a myriad of transmembrane proteins, including adhesion proteins, growth factor precursors and cytokines being essential for development and tissue homeostasis. Associates with six members of the tetraspanin superfamily TspanC8 which regulate its exit from the endoplasmic reticulum and its substrate selectivity. Cleaves the membrane-bound precursor of TNF-alpha to its mature soluble form. Responsible for the proteolytical release of soluble JAM3 from endothelial cells surface. Responsible for the proteolytic release of several other cell-surface proteins, including heparin-binding epidermal growth-like factor, ephrin-A2, CD44, CDH2 and for constitutive and regulated alpha-secretase cleavage of amyloid precursor protein (APP) at '687-Lys-|-Leu-688'. Contributes to the normal cleavage of the cellular prion protein. Involved in the cleavage of the adhesion molecule L1 at the cell surface and in released membrane vesicles, suggesting a vesicle-based protease activity. Also controls the proteolytic processing of Notch and mediates lateral inhibition during neurogenesis. Required for the development of type 1 transitional B cells into marginal zone B cells, probably by cleaving Notch. Responsible for the FasL ectodomain shedding and for the generation of the remnant ADAM10-processed FasL (FasL APL) transmembrane form. Also cleaves the ectodomain of the integral membrane proteins CORIN and ITM2B. Mediates the proteolytic cleavage of LAG3, leading to release the secreted form of LAG3. Mediates the proteolytic cleavage of IL6R and IL11RA, leading to the release of secreted forms of IL6R and IL11RA. Enhances the cleavage of CHL1 by BACE1. Cleaves NRCAM. Cleaves TREM2, resulting in shedding of the TREM2 ectodomain. Involved in the development and maturation of glomerular and coronary vasculature. During development of the cochlear organ of Corti, promotes pillar cell separation by forming a ternary complex with CADH1 and EPHA4 and cleaving CADH1 at adherens junctions. May regulate the EFNA5-EPHA3 signaling. In Mus musculus (Mouse), this protein is Disintegrin and metalloproteinase domain-containing protein 10 (Adam10).